The sequence spans 245 residues: tRNA (guanine-N(1)-)-methyltransferase (245 aa).

Residues Gly-114 and 134–139 contribute to the S-adenosyl-L-methionine site; that span reads IGDYIL.

This sequence belongs to the RNA methyltransferase TrmD family. As to quaternary structure, homodimer.

It localises to the cytoplasm. It carries out the reaction guanosine(37) in tRNA + S-adenosyl-L-methionine = N(1)-methylguanosine(37) in tRNA + S-adenosyl-L-homocysteine + H(+). In terms of biological role, specifically methylates guanosine-37 in various tRNAs. This chain is tRNA (guanine-N(1)-)-methyltransferase, found in Listeria welshimeri serovar 6b (strain ATCC 35897 / DSM 20650 / CCUG 15529 / CIP 8149 / NCTC 11857 / SLCC 5334 / V8).